The primary structure comprises 250 residues: 5'-nucleotidase SurE (250 aa).

Asp8, Asp9, Ser39, and Asn95 together coordinate a divalent metal cation.

This sequence belongs to the SurE nucleotidase family. Requires a divalent metal cation as cofactor.

Its subcellular location is the cytoplasm. The catalysed reaction is a ribonucleoside 5'-phosphate + H2O = a ribonucleoside + phosphate. In terms of biological role, nucleotidase that shows phosphatase activity on nucleoside 5'-monophosphates. The chain is 5'-nucleotidase SurE from Cupriavidus necator (strain ATCC 17699 / DSM 428 / KCTC 22496 / NCIMB 10442 / H16 / Stanier 337) (Ralstonia eutropha).